Consider the following 555-residue polypeptide: Urocanate hydratase (555 aa).

NAD(+)-binding positions include Gly53 to Gly54, Gln131, Gly177 to Gly179, Glu197, Arg202, Asn243 to Ala244, Gln264 to His268, Tyr274 to Leu275, and Tyr323. The active site involves Cys411. Residue Gly493 participates in NAD(+) binding.

This sequence belongs to the urocanase family. NAD(+) serves as cofactor.

It localises to the cytoplasm. It catalyses the reaction 4-imidazolone-5-propanoate = trans-urocanate + H2O. Its pathway is amino-acid degradation; L-histidine degradation into L-glutamate; N-formimidoyl-L-glutamate from L-histidine: step 2/3. Catalyzes the conversion of urocanate to 4-imidazolone-5-propionate. This chain is Urocanate hydratase, found in Maricaulis maris (strain MCS10) (Caulobacter maris).